Consider the following 320-residue polypeptide: Heterogeneous nuclear ribonucleoprotein A1-like 2 (320 aa).

Residues 4 to 94 form a globular A domain region; the sequence is SASPKEPEQL…EPKRAVSRED (91 aa). Ser6 and Ser22 each carry phosphoserine. RRM domains are found at residues 14-97 and 105-184; these read RKLF…DSQR and KKIF…LPKQ. Positions 95-185 are globular B domain; the sequence is SQRPGAHLTV…EVRKALPKQE (91 aa). Residues 181–216 form a disordered region; that stretch reads LPKQEMASASSSQRGRRGSGNFGGGRGDGFGGNDNF. Arg194, Arg206, Arg218, and Arg225 each carry asymmetric dimethylarginine; alternate. Omega-N-methylarginine; alternate occurs at positions 194, 206, 218, and 225. A compositionally biased stretch (gly residues) spans 198–216; it reads GSGNFGGGRGDGFGGNDNF. An RNA-binding RGG-box region spans residues 218–240; it reads RGGNFSGRGGFGGSCGGGGYGGS. The interval 268–305 is nuclear targeting sequence; the sequence is NQSSNFGPMKGGNFGGRSSGPYGGGGQYFAKPQNQGGY. Residues 271–320 form a disordered region; it reads SNFGPMKGGNFGGRSSGPYGGGGQYFAKPQNQGGYGVSSSSSSYGSGRRF. Positions 276 to 294 are enriched in gly residues; that stretch reads MKGGNFGGRSSGPYGGGGQ. Arg284 carries the omega-N-methylarginine modification. Lys298 carries the post-translational modification N6-acetyllysine. A compositionally biased stretch (low complexity) spans 307–320; sequence VSSSSSSYGSGRRF.

Its subcellular location is the nucleus. The protein localises to the cytoplasm. Functionally, involved in the packaging of pre-mRNA into hnRNP particles, transport of poly(A) mRNA from the nucleus to the cytoplasm and may modulate splice site selection. The polypeptide is Heterogeneous nuclear ribonucleoprotein A1-like 2 (HNRNPA1L2) (Homo sapiens (Human)).